The chain runs to 258 residues: Phosphate import ATP-binding protein PstB (258 aa).

The 243-residue stretch at 5-247 folds into the ABC transporter domain; that stretch reads LDLKGVNIYY…EKIFSNPSQK (243 aa). Residue 37-44 participates in ATP binding; that stretch reads GPSGCGKT.

The protein belongs to the ABC transporter superfamily. Phosphate importer (TC 3.A.1.7) family. In terms of assembly, the complex is composed of two ATP-binding proteins (PstB), two transmembrane proteins (PstC and PstA) and a solute-binding protein (PstS).

It is found in the cell membrane. It carries out the reaction phosphate(out) + ATP + H2O = ADP + 2 phosphate(in) + H(+). Its function is as follows. Part of the ABC transporter complex PstSACB involved in phosphate import. Responsible for energy coupling to the transport system. The protein is Phosphate import ATP-binding protein PstB of Mycolicibacterium paratuberculosis (strain ATCC BAA-968 / K-10) (Mycobacterium paratuberculosis).